We begin with the raw amino-acid sequence, 506 residues long: Probable lipid II flippase MurJ (506 aa).

Transmembrane regions (helical) follow at residues 4 to 24 (YVVSTILVMISTFFSRIMGFV), 86 to 106 (TVITFNIISIGLIVLVMIIFA), 127 to 147 (VFGYLVLYILLISLSSIFVSV), 153 to 173 (IFFIPSFSPIMLSFGIILSIF), 181 to 201 (IYSAVIGVIFGGFLQFLIPFA), 232 to 252 (IFGFSISIITQQISFALASTL), 263 to 283 (AVVYYQLPVGIFYISIATVIF), 308 to 328 (ILLLIFIPVSFLMFIWSDYIL), 345 to 365 (TASVLKCFLLGLLFYSMFGFF), 377 to 397 (TPFYLSVLFSILDIAISVFGI), 405 to 425 (LALAQSISFMICVIVFYFIIL), 436 to 456 (ILFVLLKSIITLFPLYAIYFF), and 474 to 494 (LMAAGIVSIFVLFICYSVLGI).

It belongs to the MurJ/MviN family.

It is found in the cell inner membrane. It participates in cell wall biogenesis; peptidoglycan biosynthesis. In terms of biological role, involved in peptidoglycan biosynthesis. Transports lipid-linked peptidoglycan precursors from the inner to the outer leaflet of the cytoplasmic membrane. This is Probable lipid II flippase MurJ from Borreliella burgdorferi (strain ATCC 35210 / DSM 4680 / CIP 102532 / B31) (Borrelia burgdorferi).